The chain runs to 640 residues: Autophagy-related protein 20 (640 aa).

Composition is skewed to polar residues over residues 1 to 18 (MSDLNDVQENAKLNSETR) and 126 to 153 (AETCRTSLSGSINSMNGETSASEEPSVS). Disordered stretches follow at residues 1–63 (MSDL…NNKV) and 126–156 (AETCRTSLSGSINSMNGETSASEEPSVSNRK). Position 2 is an N-acetylserine (Ser2). Residues 140–301 (MNGETSASEE…DFLDPNNHNW (162 aa)) enclose the PX domain. A 1,2-diacyl-sn-glycero-3-phospho-(1D-myo-inositol-3-phosphate) is bound by residues Arg192, Ser194, Lys218, and Arg267. 2 positions are modified to phosphoserine: Ser361 and Ser363. Coiled coils occupy residues 475-512 (LQNEMIKKSLNSKRAQLEKLEAQNNEYKDVDKIIDNEM) and 562-593 (TASINLKKEIEQLSESLEVTENDLEVISKVIK).

This sequence belongs to the sorting nexin family. Forms a complex with SNX4 and ATG17.

The protein resides in the endosome membrane. It is found in the preautophagosomal structure membrane. Required for cytoplasm to vacuole transport (Cvt), pexophagy and mitophagy. Also involved in endoplasmic reticulum-specific autophagic process and is essential for the survival of cells subjected to severe ER stress. Functions in protein retrieval from the endocytic pathway. Required for proper sorting of the v-SNARE protein SNC1. The polypeptide is Autophagy-related protein 20 (ATG20) (Saccharomyces cerevisiae (strain ATCC 204508 / S288c) (Baker's yeast)).